Consider the following 559-residue polypeptide: (-)-drimenol synthase (559 aa).

5 residues coordinate Mg(2+): Asp-311, Asp-315, Asp-456, Ser-460, and Glu-464. The DDXXD motif signature appears at 311-315 (DDIYD).

The protein belongs to the terpene synthase family. The cofactor is Mg(2+).

It carries out the reaction (2E,6E)-farnesyl diphosphate + H2O = (5S,9S,10S)-drim-7-en-11-ol + diphosphate. The protein operates within secondary metabolite biosynthesis; terpenoid biosynthesis. Functionally, catalyzes the conversion of (2E,6E)-farnesyl diphosphate (FPP) into drimenol, a precursor of the sesquiterpenoid polygodial. Polygodial has been shown to be an antifeedant for a number of herbivorous insects. In Persicaria hydropiper (Marshpepper knotweed), this protein is (-)-drimenol synthase.